The sequence spans 298 residues: MLTTPTRFVALRIPFRSSNKIPISIAPSPKVFPRKPVIRVPASLRFVATMSTPAAAVNATVTVTDAGRGSITHVIFDMDGLLLDTEKFYTEVQEKILARYNKTFDWSLKAKMMGRKAIEAARLFVDESGISDSLSAEDFIVERESMLQDLFPTSDLMPGASRLLRHLHGKGIPICIATGTHTRHFDLKTQRHRELFSLMHHVVRGDDPEVKEGKPAPDGFLAASRRFEDGPVDPRKVLVFEDAPSGVQAAKNAGMNVIMVPDSRLDKSYCNVADQVLASLLDFKPEEWGLPSFQDSHN.

The transit peptide at 1–46 directs the protein to the mitochondrion; it reads MLTTPTRFVALRIPFRSSNKIPISIAPSPKVFPRKPVIRVPASLRF. Catalysis depends on aspartate 77, which acts as the Nucleophile. Mg(2+) contacts are provided by aspartate 77, aspartate 79, and aspartate 242. The Proton donor role is filled by aspartate 79.

The protein belongs to the HAD-like hydrolase superfamily. DOG/GPP family. The cofactor is Mg(2+). As to expression, ubiquitous with highest expression in siliques. Mainly restricted to the meristem of immature flower and vascular elements of the root, shoot, leave, siliqua and developing embryo (at the protein level).

The protein localises to the mitochondrion. It carries out the reaction sn-glycerol 1-phosphate + H2O = glycerol + phosphate. It catalyses the reaction sn-glycerol 3-phosphate + H2O = glycerol + phosphate. The catalysed reaction is 5-amino-6-(5-phospho-D-ribitylamino)uracil + H2O = 5-amino-6-(D-ribitylamino)uracil + phosphate. Acts as a glycerol-3-phosphatase with higher stereospecificity for L-glycerol-3-phosphate than DL-glycerol-3-phosphate. Can also dephosphorylate in vitro 5-amino-6-(5-phospho-D-ribitylamino)uracil, also known as ARPP. The protein is (DL)-glycerol-3-phosphatase 1, mitochondrial of Arabidopsis thaliana (Mouse-ear cress).